A 273-amino-acid chain; its full sequence is Undecaprenyl-diphosphatase (273 aa).

8 helical membrane passes run 18-40 (GLTE…LLGF), 45-65 (AKTF…VVFW), 92-112 (GHIL…HEQI), 114-134 (AIFA…LLLA), 151-171 (LTYL…WPGF), 189-209 (YAAS…ATVL), 225-245 (MFAI…KFFL), and 253-273 (FVPF…ILIG).

This sequence belongs to the UppP family.

Its subcellular location is the cell inner membrane. The catalysed reaction is di-trans,octa-cis-undecaprenyl diphosphate + H2O = di-trans,octa-cis-undecaprenyl phosphate + phosphate + H(+). Functionally, catalyzes the dephosphorylation of undecaprenyl diphosphate (UPP). Confers resistance to bacitracin. This chain is Undecaprenyl-diphosphatase, found in Sodalis glossinidius (strain morsitans).